The following is a 40-amino-acid chain: QQQQCRQGQQTHQRQRVCQARRPAIQRCCQQLRNIQVQCR.

Post-translationally, N-glycosylated.

Its function is as follows. Chitin-binding protein. Has antifungal activity against C.krusei, C.albicans, C.tropicalis and C.parapsilosis. Has antinociceptive and anti-inflammatory activity in mice. This Moringa oleifera (Horseradish tree) protein is Chitin-binding protein 4.